A 723-amino-acid polypeptide reads, in one-letter code: Catalase-peroxidase (723 aa).

The segment at residues Trp97 to Tyr225 is a cross-link (tryptophyl-tyrosyl-methioninium (Trp-Tyr) (with M-251)). His98 acts as the Proton acceptor in catalysis. Residues Tyr225 to Met251 constitute a cross-link (tryptophyl-tyrosyl-methioninium (Tyr-Met) (with W-97)). His266 contacts heme b.

The protein belongs to the peroxidase family. Peroxidase/catalase subfamily. As to quaternary structure, homodimer or homotetramer. Heme b serves as cofactor. In terms of processing, formation of the three residue Trp-Tyr-Met cross-link is important for the catalase, but not the peroxidase activity of the enzyme.

It carries out the reaction H2O2 + AH2 = A + 2 H2O. The catalysed reaction is 2 H2O2 = O2 + 2 H2O. Functionally, bifunctional enzyme with both catalase and broad-spectrum peroxidase activity. Involved in tumorigenesis. This chain is Catalase-peroxidase, found in Rhizobium radiobacter (Agrobacterium tumefaciens).